Reading from the N-terminus, the 268-residue chain is Phosphatidylglycerol--prolipoprotein diacylglyceryl transferase (268 aa).

The next 7 helical transmembrane spans lie at 14–34 (IIFS…LIGF), 60–80 (LLFN…VLFY), 95–115 (VWEG…AMLV), 124–144 (FWVV…MGRI), 176–196 (SQLY…NWFI), 203–223 (GSVA…VEFF), and 238–258 (ISMG…FIVL). R143 lines the a 1,2-diacyl-sn-glycero-3-phospho-(1'-sn-glycerol) pocket.

The protein belongs to the Lgt family.

The protein resides in the cell inner membrane. The catalysed reaction is L-cysteinyl-[prolipoprotein] + a 1,2-diacyl-sn-glycero-3-phospho-(1'-sn-glycerol) = an S-1,2-diacyl-sn-glyceryl-L-cysteinyl-[prolipoprotein] + sn-glycerol 1-phosphate + H(+). Its pathway is protein modification; lipoprotein biosynthesis (diacylglyceryl transfer). In terms of biological role, catalyzes the transfer of the diacylglyceryl group from phosphatidylglycerol to the sulfhydryl group of the N-terminal cysteine of a prolipoprotein, the first step in the formation of mature lipoproteins. This Mannheimia succiniciproducens (strain KCTC 0769BP / MBEL55E) protein is Phosphatidylglycerol--prolipoprotein diacylglyceryl transferase.